A 109-amino-acid chain; its full sequence is uncharacterized protein (109 aa).

This is an uncharacterized protein from Mycoplasma pneumoniae (strain ATCC 29342 / M129 / Subtype 1) (Mycoplasmoides pneumoniae).